Consider the following 122-residue polypeptide: Structural protein p14.5 (122 aa).

Disordered regions lie at residues 1 to 27 (MADF…LEYD) and 85 to 122 (TSLV…HKSK). The residue at position 2 (Ala2) is an N-acetylalanine; by host. The span at 105-122 (KPKKKKHLFPKLSSHKSK) shows a compositional bias: basic residues.

This sequence belongs to the asfivirus structural protein p14.5 family. In terms of assembly, interacts with the major capsid protein. Interacts with host IRF3; this interaction interferes with the recruitment of IRF3 to TBK1. Acetylated.

The protein resides in the virion. Its function is as follows. Structural protein required for transport of intracellular particles from the assembly sites to the plasma membrane. Binds to both ssDNA and dsDNA. Suppressed the activation of the cGAS/STING pathway by interfering with the recruitment of IRF3 to TBK1, which in turn suppresses IRF3 phosphorylation, decreasing interferon production. The protein is Structural protein p14.5 of African swine fever virus (isolate Tick/Malawi/Lil 20-1/1983) (ASFV).